The sequence spans 50 residues: Sperm protamine P1 (50 aa).

2 disulfides stabilise this stretch: C7–C15 and C38–C46.

This sequence belongs to the protamine P1 family. As to quaternary structure, cross-linked by interchain disulfide bonds around the DNA-helix. In terms of tissue distribution, testis.

The protein localises to the nucleus. The protein resides in the chromosome. Functionally, protamines substitute for histones in the chromatin of sperm during the haploid phase of spermatogenesis. They compact sperm DNA into a highly condensed, stable and inactive complex. The sequence is that of Sperm protamine P1 (PRM1) from Equus asinus (Donkey).